We begin with the raw amino-acid sequence, 86 residues long: UPF0297 protein SSP1144 (86 aa).

Belongs to the UPF0297 family.

In Staphylococcus saprophyticus subsp. saprophyticus (strain ATCC 15305 / DSM 20229 / NCIMB 8711 / NCTC 7292 / S-41), this protein is UPF0297 protein SSP1144.